A 174-amino-acid polypeptide reads, in one-letter code: Repair DNA polymerase X (174 aa).

The involved in ssDNA binding stretch occupies residues 42 to 51; the sequence is REEKMLNDVD. Asp-49 and Asp-51 together coordinate Mg(2+). An intrachain disulfide couples Cys-81 to Cys-86. Asp-100 contacts Mg(2+).

It belongs to the DNA polymerase type-X family. Requires Mg(2+) as cofactor.

It localises to the virion. It carries out the reaction DNA(n) + a 2'-deoxyribonucleoside 5'-triphosphate = DNA(n+1) + diphosphate. In terms of biological role, error-prone polymerase lacking a proofreading 3'-5' exonuclease which catalyzes the gap-filling reaction during the DNA repair process. Specifically binds intermediates in the single-nucleotide base-excision repair process. Also catalyzes DNA polymerization with low nucleotide-insertion fidelity. Probably acts as a strategic DNA mutase, which gives rise to a rapid emergence of variants. Generates mismatched G-G pairs, in that case, the polymerase first binds the deoxynucleotide followed by mismatch formation. Together with the viral DNA ligase, fills the single nucleotide gaps generated by the AP endonuclease. Binds DNA with high affinity via the helix alphaE. In African swine fever virus (isolate Tick/Malawi/Lil 20-1/1983) (ASFV), this protein is Repair DNA polymerase X.